The following is a 1245-amino-acid chain: Prospore membrane adapter protein SPO71 (1245 aa).

The tract at residues 207–270 (LHEEDQENTN…DFNYNREPSE (64 aa)) is disordered. Residues 227–247 (KRKDLGESKSISRKDYSHFDR) show a composition bias toward basic and acidic residues. A PxP motif is present at residues 385–399 (INILPPWPTELTEEE). Positions 1030–1229 (LIQKGPLYQK…WVMSIYYELE (200 aa)) constitute a PH domain. The interval 1154-1192 (KKGNEKQYTQDYGRQDNNIDPPSAPEADLNNSNVPSNTD) is disordered. 2 stretches are compositionally biased toward polar residues: residues 1159-1173 (KQYTQDYGRQDNNID) and 1182-1191 (LNNSNVPSNT).

It belongs to the SPO71 family. Interacts (via PxP motif) with VPS13 (via SHR-BD domain); during prospore membrane formation.

It localises to the prospore membrane. In terms of biological role, recruits the lipid transfer protein VPS13 to the prospore membrane during sporulation, thereby aiding prospore membrane formation. This chain is Prospore membrane adapter protein SPO71 (SPO71), found in Saccharomyces cerevisiae (strain ATCC 204508 / S288c) (Baker's yeast).